The chain runs to 232 residues: Ubiquinone biosynthesis O-methyltransferase (232 aa).

S-adenosyl-L-methionine contacts are provided by Arg36, Gly55, Asp76, and Leu120.

It belongs to the methyltransferase superfamily. UbiG/COQ3 family.

It carries out the reaction a 3-demethylubiquinol + S-adenosyl-L-methionine = a ubiquinol + S-adenosyl-L-homocysteine + H(+). The enzyme catalyses a 3-(all-trans-polyprenyl)benzene-1,2-diol + S-adenosyl-L-methionine = a 2-methoxy-6-(all-trans-polyprenyl)phenol + S-adenosyl-L-homocysteine + H(+). It participates in cofactor biosynthesis; ubiquinone biosynthesis. In terms of biological role, O-methyltransferase that catalyzes the 2 O-methylation steps in the ubiquinone biosynthetic pathway. This chain is Ubiquinone biosynthesis O-methyltransferase, found in Pseudomonas fluorescens (strain ATCC BAA-477 / NRRL B-23932 / Pf-5).